The sequence spans 250 residues: Probable transcriptional regulatory protein Mmc1_0479 (250 aa).

The protein belongs to the TACO1 family.

Its subcellular location is the cytoplasm. This Magnetococcus marinus (strain ATCC BAA-1437 / JCM 17883 / MC-1) protein is Probable transcriptional regulatory protein Mmc1_0479.